An 864-amino-acid polypeptide reads, in one-letter code: Leucine--tRNA ligase (864 aa).

Positions 57-67 (PYPSGNLHMGH) match the 'HIGH' region motif. The 'KMSKS' region signature appears at 628–632 (KMSKS). Position 631 (Lys631) interacts with ATP.

It belongs to the class-I aminoacyl-tRNA synthetase family.

The protein localises to the cytoplasm. It carries out the reaction tRNA(Leu) + L-leucine + ATP = L-leucyl-tRNA(Leu) + AMP + diphosphate. The protein is Leucine--tRNA ligase of Prochlorococcus marinus (strain MIT 9515).